The sequence spans 279 residues: Sulfur carrier protein FdhD (279 aa).

The active-site Cysteine persulfide intermediate is the Cys122.

Belongs to the FdhD family.

It localises to the cytoplasm. Required for formate dehydrogenase (FDH) activity. Acts as a sulfur carrier protein that transfers sulfur from IscS to the molybdenum cofactor prior to its insertion into FDH. This Thermoplasma volcanium (strain ATCC 51530 / DSM 4299 / JCM 9571 / NBRC 15438 / GSS1) protein is Sulfur carrier protein FdhD.